Reading from the N-terminus, the 431-residue chain is Forkhead box protein P3 (431 aa).

The interval 1–68 is disordered; it reads MPNPRPGKPS…SSLNPMPPSQ (68 aa). Over residues 10–25 the composition is skewed to low complexity; the sequence is SAPSLALGPSPGASPS. At Ser19 the chain carries Phosphoserine; by CDK2. N6-acetyllysine is present on Lys31. Residues 68 to 76 carry the Nuclear export signal motif; it reads QLQLPTLPL. An LXXLL motif motif is present at residues 92–96; it reads LQALL. The essential for transcriptional repressor activity and for interaction with KAT5 and HDAC7 stretch occupies residues 106–190; that stretch reads LSTVDAHART…STLSAMPQSS (85 aa). The interval 149-199 is interaction with IKZF4; that stretch reads LPPGINVASLEWVSREPALLCTFPNPGAPRKDSTLSAMPQSSYPLLANGVC. A C2H2-type zinc finger spans residues 197-222; that stretch reads GVCKWPGCEKVFEEPEDFLKHCQADH. Positions 239-248 match the Nuclear export signal motif; sequence VQSLEQQLVL. The tract at residues 239–260 is leucine-zipper; sequence VQSLEQQLVLEKEKLSAMQAHL. Glycyl lysine isopeptide (Lys-Gly) (interchain with G-Cter in ubiquitin) cross-links involve residues Lys250 and Lys252. 2 positions are modified to N6-acetyllysine; alternate: Lys263 and Lys268. Residues Lys263 and Lys268 each participate in a glycyl lysine isopeptide (Lys-Gly) (interchain with G-Cter in ubiquitin); alternate cross-link. The interaction with RUNX1 stretch occupies residues 278–336; the sequence is GSCCIVAAGSQGSAVPAWSGPREAPDSLFAVRRHLWGSHGNSTFPEFLHNMDYFKFHNM. Positions 337–423 form a DNA-binding region, fork-head; the sequence is RPPFTYATLI…RKKRSQRPSR (87 aa). Lys393 participates in a covalent cross-link: Glycyl lysine isopeptide (Lys-Gly) (interchain with G-Cter in ubiquitin). The Nuclear localization signal motif lies at 414–417; that stretch reads RKKR. Ser418 is modified (phosphoserine). Positions 418–431 are excised as a propeptide; that stretch reads SQRPSRCSNPTPGP.

As to quaternary structure, homodimer. Dimerization is essential for its transcriptional regulator activity. Interacts with IKZF3. Interacts (via LXXLL motif) with RORA (via AF-2 motif). Interacts with HDAC9 in the absence of T-cell stimulation. Interacts with PPP1CA, PPP1CB, PPP1CG, KAT5, HDAC7, HSPA8, USP7, STUB1, HSPA1A/B, RUNX1, RUNX2, RUNX3, RELA, NFATC2, IKFZ4 and RORC. In terms of processing, phosphorylation at Ser-418 regulates its transcriptional repressor activity and consequently, regulatory T-cells (Treg) suppressive function. Phosphorylation by CDK2 negatively regulates its transcriptional activity and protein stability. Polyubiquitinated, leading to its proteasomal degradation in regulatory T-cells (Treg) which is mediated by STUB1 in a HSPA1A/B-dependent manner. Deubiquitinated by USP7 and USP44 leading to increase in protein stability. Post-translationally, acetylation on lysine residues stabilizes FOXP3 and promotes differentiation of T-cells into induced regulatory T-cells (iTregs) associated with suppressive functions. Acetylation is mediated by a coordinated action of KAT5 and EP300/p300 acetyltransferases: EP300/p300 is required to enhance KAT5 autoacetylation, promoting acetylation of FOXP3 by KAT5. Deacetylated by SIRT1. In terms of processing, undergoes proteolytic cleavage in activated regulatory T-cells (Treg), and can be cleaved at either the N- or C-terminal site, or at both sites.

Its subcellular location is the nucleus. The protein localises to the cytoplasm. In terms of biological role, transcriptional regulator which is crucial for the development and inhibitory function of regulatory T-cells (Treg). Plays an essential role in maintaining homeostasis of the immune system by allowing the acquisition of full suppressive function and stability of the Treg lineage, and by directly modulating the expansion and function of conventional T-cells. Can act either as a transcriptional repressor or a transcriptional activator depending on its interactions with other transcription factors, histone acetylases and deacetylases. The suppressive activity of Treg involves the coordinate activation of many genes, including CTLA4 and TNFRSF18 by FOXP3 along with repression of genes encoding cytokines such as interleukin-2 (IL2) and interferon-gamma (IFNG). Inhibits cytokine production and T-cell effector function by repressing the activity of two key transcription factors, RELA and NFATC2. Mediates transcriptional repression of IL2 via its association with histone acetylase KAT5 and histone deacetylase HDAC7. Can activate the expression of TNFRSF18, IL2RA and CTLA4 and repress the expression of IL2 and IFNG via its association with transcription factor RUNX1. Inhibits the differentiation of IL17 producing helper T-cells (Th17) by antagonizing RORC function, leading to down-regulation of IL17 expression, favoring Treg development. Inhibits the transcriptional activator activity of RORA. Can repress the expression of IL2 and IFNG via its association with transcription factor IKZF4. The sequence is that of Forkhead box protein P3 (FOXP3) from Macaca fascicularis (Crab-eating macaque).